We begin with the raw amino-acid sequence, 204 residues long: Tat proofreading chaperone DmsD (204 aa).

Belongs to the TorD/DmsD family. DmsD subfamily.

In terms of biological role, required for biogenesis/assembly of DMSO reductase, but not for the interaction of the DmsA signal peptide with the Tat system. May be part of a chaperone cascade complex that facilitates a folding-maturation pathway for the substrate protein. The polypeptide is Tat proofreading chaperone DmsD (Escherichia coli O157:H7).